A 420-amino-acid polypeptide reads, in one-letter code: CinA-like protein (420 aa).

This sequence belongs to the CinA family.

The polypeptide is CinA-like protein (Geotalea uraniireducens (strain Rf4) (Geobacter uraniireducens)).